Here is a 465-residue protein sequence, read N- to C-terminus: Na(+)-translocating NADH-quinone reductase subunit A (465 aa).

The protein belongs to the NqrA family. Composed of six subunits; NqrA, NqrB, NqrC, NqrD, NqrE and NqrF.

It catalyses the reaction a ubiquinone + n Na(+)(in) + NADH + H(+) = a ubiquinol + n Na(+)(out) + NAD(+). In terms of biological role, NQR complex catalyzes the reduction of ubiquinone-1 to ubiquinol by two successive reactions, coupled with the transport of Na(+) ions from the cytoplasm to the periplasm. NqrA to NqrE are probably involved in the second step, the conversion of ubisemiquinone to ubiquinol. The polypeptide is Na(+)-translocating NADH-quinone reductase subunit A (Chlamydia trachomatis serovar A (strain ATCC VR-571B / DSM 19440 / HAR-13)).